The primary structure comprises 232 residues: F420-dependent NADP reductase (232 aa).

NADP(+)-binding positions include 15–18 (TGDQ), 37–38 (SR), Lys42, Val80, Val106, and Ala151.

The protein belongs to the F420-dependent NADP reductase family. In terms of assembly, homotetramer.

The enzyme catalyses reduced coenzyme F420-(gamma-L-Glu)(n) + NADP(+) = oxidized coenzyme F420-(gamma-L-Glu)(n) + NADPH + 2 H(+). Catalyzes the reduction of NADP(+) with F420H(2) via hydride transfer, and likely the reverse reaction, i.e. the reduction of F420 with NADPH. Probably functions in the regeneration of NADPH required in biosynthetic reactions. Is specific for reduced F420 as electron donor for the reduction of NADP; neither reduced FAD nor FMN can act as electron donor. The enzyme is also specific for NADP; NAD is not utilized as substrate. This chain is F420-dependent NADP reductase (fno), found in Methanothermobacter thermautotrophicus (strain ATCC 29096 / DSM 1053 / JCM 10044 / NBRC 100330 / Delta H) (Methanobacterium thermoautotrophicum).